We begin with the raw amino-acid sequence, 149 residues long: 3-dehydroquinate dehydratase (149 aa).

Y22 functions as the Proton acceptor in the catalytic mechanism. The substrate site is built by N73, H79, and D86. The active-site Proton donor is the H99. Substrate-binding positions include 100–101 and R110; that span reads LS.

This sequence belongs to the type-II 3-dehydroquinase family. Homododecamer.

It catalyses the reaction 3-dehydroquinate = 3-dehydroshikimate + H2O. The protein operates within metabolic intermediate biosynthesis; chorismate biosynthesis; chorismate from D-erythrose 4-phosphate and phosphoenolpyruvate: step 3/7. Its function is as follows. Catalyzes a trans-dehydration via an enolate intermediate. In Prochlorococcus marinus (strain MIT 9313), this protein is 3-dehydroquinate dehydratase.